The following is a 1472-amino-acid chain: Vacuolar cation-transporting ATPase YPK9 (1472 aa).

Position 1 is an N-acetylmethionine (Met-1). Composition is skewed to polar residues over residues 1–12 (MDIPSSNQIQHG) and 72–87 (SFQS…SGNL). Disordered regions lie at residues 1 to 32 (MDIP…TATT), 71 to 115 (HSFQ…SRNP), and 179 to 273 (AKSY…DDVH). Over 1 to 293 (MDIPSSNQIQ…YHEKFYPQYA (293 aa)) the chain is Cytoplasmic. The residue at position 95 (Thr-95) is a Phosphothreonine. 2 stretches are compositionally biased toward low complexity: residues 103 to 115 (SSAE…SRNP) and 211 to 222 (SATHSSSSLSRY). Ser-108 carries the post-translational modification Phosphoserine. Residues 234 to 243 (SQTDEILEDE) show a composition bias toward acidic residues. Residues 294-315 (PNLHYQRFYIAEEDLVIGIAAY) form a helical membrane-spanning segment. At 316–321 (QTSKFW) the chain is on the vacuolar side. A helical transmembrane segment spans residues 322–344 (YIIYNLCCFLTFGLVYLLTRWLP). The Cytoplasmic segment spans residues 345–488 (HLKVKLYGVK…INLRMKTTSE (144 aa)). The chain crosses the membrane as a helical span at residues 489–511 (ILFNEVLHPFYVFQVFSIILWGI). Residues 512–514 (DEY) lie on the Vacuolar side of the membrane. A helical transmembrane segment spans residues 515 to 533 (YYYAACIFLISVLSIFDSL). Residues 534–693 (NEQKKVSRNL…PTGFKFYRDS (160 aa)) lie on the Cytoplasmic side of the membrane. Residues 694 to 713 (FKYIGFMSLIAIFGFCVSCV) traverse the membrane as a helical segment. Residues 714–726 (QFIKLGLDKKTMI) lie on the Vacuolar side of the membrane. Residues 727 to 748 (LRALDIITIVVPPALPATLTIG) form a helical membrane-spanning segment. Topologically, residues 749–1244 (TNFALSRLKE…ALVTSFACFQ (496 aa)) are cytoplasmic. The 4-aspartylphosphate intermediate role is filled by Asp-781. Phosphoserine is present on residues Ser-1117 and Ser-1120. Residues Asp-1187 and Asp-1191 each contribute to the Mg(2+) site. Residues 1245-1264 (YMSLYSAIQFITITILYSRG) form a helical membrane-spanning segment. Topologically, residues 1265 to 1271 (SNLGDFQ) are vacuolar. The chain crosses the membrane as a helical span at residues 1272 to 1289 (FLYIDLLLIVPIAICMSW). Topologically, residues 1290-1307 (SKSYEKIDKKRPSANLVS) are cytoplasmic. Residues 1308–1331 (PKILVPLLISVFLVFLFQFIPWII) traverse the membrane as a helical segment. At 1332-1351 (VQKMSWYIKPIVGGDDAVQS) the chain is on the vacuolar side. Residues 1352-1374 (SDNTVLFFVSNFQYILTAIVLSV) traverse the membrane as a helical segment. Over 1375 to 1387 (GPPYREPMSKNFE) the chain is Cytoplasmic. The helical transmembrane segment at 1388–1407 (FIVDITVSIGASLLLMTLDT) threads the bilayer. Residues 1408-1423 (ESYLGKMLQLTPISNS) are Vacuolar-facing. A helical membrane pass occupies residues 1424–1446 (FTMFIIVWVILNYYAQLYIPPSI). Topologically, residues 1447–1472 (KGWLKKKKSSKKYKLLIQEEMKLKEV) are cytoplasmic.

The protein belongs to the cation transport ATPase (P-type) (TC 3.A.3) family. Type V subfamily.

The protein resides in the vacuole membrane. The enzyme catalyses ATP + H2O = ADP + phosphate + H(+). Functionally, vacuolar transporter which plays a role in sequestration of divalent heavy metal ions. The protein is Vacuolar cation-transporting ATPase YPK9 (YPK9) of Saccharomyces cerevisiae (strain ATCC 204508 / S288c) (Baker's yeast).